Reading from the N-terminus, the 485-residue chain is Expansin-like protein 8 (485 aa).

The N-terminal stretch at 1 to 21 (MRISIILLSLLFLSLHSLIKA) is a signal peptide. The Extracellular portion of the chain corresponds to 22–464 (DITKLSVCGS…QSGHHASSNT (443 aa)). Positions 26 to 139 (LSVCGSARAV…QIVSCGYSGN (114 aa)) constitute an Expansin-like EG45 domain. Intrachain disulfides connect C29-C70 and C73-C134. N-linked (GlcNAc...) asparagine glycans are attached at residues N117 and N365. The interval 408-436 (EVNNKPSTTSGTGTTSSKPSSSSGGVSGG) is disordered. Residues 414-431 (STTSGTGTTSSKPSSSSG) show a composition bias toward low complexity. N454 is a glycosylation site (N-linked (GlcNAc...) asparagine). Residues 465–485 (NILLPTTFVFFISITILSLLF) traverse the membrane as a helical segment.

Belongs to the expansin family. Expansin A subfamily.

The protein localises to the membrane. Functionally, may serve to lubricate the movement of the cellulose microfibrils during cell growth and wall extension and/or may serve to maintain the fluid state of the slug cell wall. This is Expansin-like protein 8 (expl8) from Dictyostelium discoideum (Social amoeba).